The primary structure comprises 488 residues: PTS system mannitol-specific EIICB component (488 aa).

Over 1–26 the chain is Cytoplasmic; sequence MRKKLAKVKVHIQSLDSLLSSMTMPI. One can recognise a PTS EIIC type-2 domain in the interval 15–362; the sequence is LDSLLSSMTM…LSLTRKKQLK (348 aa). A helical transmembrane segment spans residues 27–48; that stretch reads IGIFIAWGLLASFFIPSGWTPD. At 49–52 the chain is on the extracellular side; that stretch reads KNLA. A helical transmembrane segment spans residues 53–73; it reads LMVGIGIQYVIPTIIXFFGGK. Residues 74–147 are Cytoplasmic-facing; it reads KIYEIRGGVI…SGFEMLVNNF (74 aa). The helical transmembrane segment at 148–169 threads the bilayer; it reads YLGFLGFALIFPSFYLSIYLIG. Topologically, residues 170–178 are extracellular; sequence YIQLGLKLL. A helical transmembrane segment spans residues 179–199; it reads VEIMQQYKLYPIAAIVIEPAK. Residues 200–289 are Cytoplasmic-facing; the sequence is VLFLNNAINH…VLLKPVLILA (90 aa). Residues 290-309 form a helical membrane-spanning segment; sequence TIAVGVVGNGILQIFNAGTI. The Extracellular segment spans residues 310-331; the sequence is APVSPGSVIAGFLQINKTPLDV. A helical membrane pass occupies residues 332-353; the sequence is AGYALALVLSAVTSLLISLLLL. The Cytoplasmic portion of the chain corresponds to 354–488; the sequence is SLTRKKQLKT…IIEKIKNEKN (135 aa). A PTS EIIB type-2 domain is found at 397-488; it reads SQVTFVCDAG…IIEKIKNEKN (92 aa). Cys-403 functions as the Phosphocysteine intermediate; for EIIB activity in the catalytic mechanism. Cys-403 is subject to Phosphocysteine; by EIIA.

In terms of assembly, homodimer.

The protein resides in the cell membrane. The catalysed reaction is D-mannitol(out) + N(pros)-phospho-L-histidyl-[protein] = D-mannitol 1-phosphate(in) + L-histidyl-[protein]. Functionally, the phosphoenolpyruvate-dependent sugar phosphotransferase system (sugar PTS), a major carbohydrate active transport system, catalyzes the phosphorylation of incoming sugar substrates concomitantly with their translocation across the cell membrane. The enzyme II CmtAB PTS system is involved in D-mannitol transport. The protein is PTS system mannitol-specific EIICB component (mtlA) of Mycoplasma pneumoniae (strain ATCC 29342 / M129 / Subtype 1) (Mycoplasmoides pneumoniae).